We begin with the raw amino-acid sequence, 93 residues long: Parbolysin P2 (93 aa).

Intrachain disulfides connect Cys-16–Cys-37 and Cys-22–Cys-33.

This sequence belongs to the worm cytolysin family. As to expression, localized within the skin and proboscis and are most readily isolated from body mucus secretions.

The protein resides in the secreted. Functionally, cytolysin that shows hemolytic activity (on bovine erythrocytes, HC(50)=5.75 mg/ml). This hemolytic activity is completely inhibited by small unilamelar vesicles composed of PC/PG, PC/PI and PC/PS in 1:1 molar ratios (with at least 100 mg/ml concentration). The protein is Parbolysin P2 of Parborlasia corrugatus (Antarctic nemertean worm).